The primary structure comprises 528 residues: Tyrosine 3-monooxygenase (528 aa).

Serine 19 is subject to Phosphoserine; by CaMK2. The disordered stretch occupies residues 33-65 (GQGAPGPSLTGSPWPGTAAPAASYTPTPRSPRF). Residues 47–59 (PGTAAPAASYTPT) are compositionally biased toward low complexity. At serine 62 the chain carries Phosphoserine. Residue serine 71 is modified to Phosphoserine; by CaMK2 and PKA. Residues histidine 361, histidine 366, and glutamate 406 each coordinate Fe cation. Serine 502 carries the phosphoserine modification.

Belongs to the biopterin-dependent aromatic amino acid hydroxylase family. As to quaternary structure, homotetramer. Interacts (when phosphorylated at Ser-19) with YWHAG; one YWHAG dimer binds to one TH tetramer and this interaction may influence the phosphorylation and dephosphorylation of other sites. Interacts with NT5DC2; the interaction results in reduced phosphorylation and decreased catalytic activity of TH. It depends on Fe(2+) as a cofactor. Post-translationally, phosphorylated on Ser-19, Ser-62 and Ser-71 by several protein kinases with different site specificities. Phosphorylation at Ser-62 and Ser-71 leads to an increase of TH activity. Phosphorylation at Ser-71 activates the enzyme and also counteracts the feedback inhibition of TH by catecholamines. Phosphorylation of Ser-19 and Ser-62 triggers the proteasomal degradation of TH through the ubiquitin-proteasome pathway. Phosphorylation at Ser-62 facilitates transport of TH from the soma to the nerve terminals via the microtubule network. Phosphorylation at Ser-19 induces the high-affinity binding to the 14-3-3 protein YWHAG; this interaction may influence the phosphorylation and dephosphorylation of other sites. Ser-19 increases the phosphorylation at Ser-71 in a hierarchical manner, leading to increased activity. In terms of tissue distribution, mainly expressed in the brain and adrenal glands.

The protein resides in the cytoplasm. The protein localises to the perinuclear region. It is found in the nucleus. It localises to the cell projection. Its subcellular location is the axon. The protein resides in the cytoplasmic vesicle. The protein localises to the secretory vesicle. It is found in the synaptic vesicle. The enzyme catalyses (6R)-L-erythro-5,6,7,8-tetrahydrobiopterin + L-tyrosine + O2 = (4aS,6R)-4a-hydroxy-L-erythro-5,6,7,8-tetrahydrobiopterin + L-dopa. It functions in the pathway catecholamine biosynthesis; dopamine biosynthesis; dopamine from L-tyrosine: step 1/2. Its activity is regulated as follows. Inhibited in feedback fashion by the catecholamine neurotransmitters, especially by dopamine in competition with tetrahydrobiopterin. Phosphorylation of several Ser/Thr residues in the N-terminus regulates the catalytic activity. Ser-62 and Ser-71 are readily phosphorylated to activate the catalytic activity. A Cysteine modification induced by N-ethylmaleimide (NEM), inhibits tyrosine 3-monooxygenase activity through the modification of the Cys-207. Catalyzes the conversion of L-tyrosine to L-dihydroxyphenylalanine (L-Dopa), the rate-limiting step in the biosynthesis of catecholamines, dopamine, noradrenaline, and adrenaline. Uses tetrahydrobiopterin and molecular oxygen to convert tyrosine to L-Dopa. In addition to tyrosine, is able to catalyze the hydroxylation of phenylalanine and tryptophan with lower specificity. Positively regulates the regression of retinal hyaloid vessels during postnatal development. Its function is as follows. Lacks catalytic activity. This Homo sapiens (Human) protein is Tyrosine 3-monooxygenase.